The primary structure comprises 206 residues: Large ribosomal subunit protein uL4 (206 aa).

Basic residues predominate over residues 66–77 (QKGTGRARHHSA). Residues 66-96 (QKGTGRARHHSARAPQFRGGGQAHGPVVRSH) form a disordered region.

The protein belongs to the universal ribosomal protein uL4 family. As to quaternary structure, part of the 50S ribosomal subunit.

Its function is as follows. One of the primary rRNA binding proteins, this protein initially binds near the 5'-end of the 23S rRNA. It is important during the early stages of 50S assembly. It makes multiple contacts with different domains of the 23S rRNA in the assembled 50S subunit and ribosome. Forms part of the polypeptide exit tunnel. This is Large ribosomal subunit protein uL4 from Brucella anthropi (strain ATCC 49188 / DSM 6882 / CCUG 24695 / JCM 21032 / LMG 3331 / NBRC 15819 / NCTC 12168 / Alc 37) (Ochrobactrum anthropi).